Here is a 1005-residue protein sequence, read N- to C-terminus: Negative regulator of pleiotropic drug resistance STB5 (1005 aa).

The disordered stretch occupies residues 1–28; the sequence is MSGPDKGSDSGQTANDPKQKKARNGQME. The segment at residues 32-59 is a DNA-binding region (zn(2)-C6 fungal-type); sequence CARCRKLKKKCPRQLPECSNCLKAREPC. Disordered regions lie at residues 129–151, 666–693, and 763–831; these read GGEQ…SINR, KGKS…EDVK, and TKPT…SSLR. The span at 673 to 693 shows a compositional bias: basic and acidic residues; that stretch reads KRFEKSKESDSDRGVTEEDVK. Positions 763 to 773 are enriched in polar residues; the sequence is TKPTANIMNDQ. Positions 792–801 are enriched in basic and acidic residues; the sequence is EGPKSLKEGN.

It is found in the nucleus. Functionally, transcription factor that negatively regulates pleiotropic drug resistance genes, including the ABC transporter genes CDR1, PDH1, and YOR1. The chain is Negative regulator of pleiotropic drug resistance STB5 from Candida glabrata (strain ATCC 2001 / BCRC 20586 / JCM 3761 / NBRC 0622 / NRRL Y-65 / CBS 138) (Yeast).